Consider the following 758-residue polypeptide: Calpain (758 aa).

The Calpain catalytic domain occupies 99-397 (LWEDPDFPAN…FSRVEVCHLG (299 aa)). Catalysis depends on residues C154, H313, and N337. Residues 398-562 (LESLEYNQNF…TSITEQELDE (165 aa)) are domain III. The tract at residues 563 to 582 (DNTNQGLPDDVIEALKLEDT) is linker. Positions 583 to 757 (LLDEDQEIEQ…AEDYLRFSVY (175 aa)) are domain IV. D641, N643, T645, H647, E652, D671, D673, S675, Y677, and E682 together coordinate Ca(2+). EF-hand domains follow at residues 658 to 693 (IQAKGWKHIFIKHDVDQSGYFSAYEFREALNDAGYH) and 694 to 729 (VSNRLINAIINRYQDPGTDKISFEDFMLCMVRLKTA).

The protein belongs to the peptidase C2 family.

Its activity is regulated as follows. Activated by free cytoplasmic calcium. In terms of biological role, calpains are calcium-activated non-lysosomal thiol-proteases. The protein is Calpain of Schistosoma mansoni (Blood fluke).